The primary structure comprises 332 residues: MQAILEHLYQGGRISREQSQQLFGAIIQGQLAPEQLAAALISMKVRGEYSEEIAGAASALLADASPFPRPDYTFADIVGTGGDGSNSINISTASAIVAAGCGARVAKHGNRSVSSCSGSSDLLAAFGIRLDMPAALSRQALDELGICFLFAPQYHSGFSHAMPVRQLLKTCTLFNVLGPLINPARPPLALIGVYSPELVLPIAETLRVLGYQRAAVVHGGDMDEVALHAPTHVAELREGTIENYTLNAADFGLSAQPAEALRGGSPEENRDILARLLQGKGEHAHESAVAANVALLLKLFGQENLRDNTHRALEEIHSGAPYARVMALAARG.

5-phospho-alpha-D-ribose 1-diphosphate contacts are provided by residues G79, 82–83 (GD), S87, 89–92 (NIST), 107–115 (KHGNRSVSS), and S119. Anthranilate is bound at residue G79. S91 contributes to the Mg(2+) binding site. N110 provides a ligand contact to anthranilate. R165 contacts anthranilate. D223 and E224 together coordinate Mg(2+).

Belongs to the anthranilate phosphoribosyltransferase family. In terms of assembly, homodimer. Requires Mg(2+) as cofactor.

It catalyses the reaction N-(5-phospho-beta-D-ribosyl)anthranilate + diphosphate = 5-phospho-alpha-D-ribose 1-diphosphate + anthranilate. It functions in the pathway amino-acid biosynthesis; L-tryptophan biosynthesis; L-tryptophan from chorismate: step 2/5. Functionally, catalyzes the transfer of the phosphoribosyl group of 5-phosphorylribose-1-pyrophosphate (PRPP) to anthranilate to yield N-(5'-phosphoribosyl)-anthranilate (PRA). This is Anthranilate phosphoribosyltransferase from Sodalis glossinidius (strain morsitans).